Here is a 523-residue protein sequence, read N- to C-terminus: Cytochrome P450 monooxygenase ple5B (523 aa).

A helical transmembrane segment spans residues 16–33 (IAAAAAGSAVAVYKLLQL). N82, N103, N122, N295, N379, and N423 each carry an N-linked (GlcNAc...) asparagine glycan. C446 contacts heme.

The protein belongs to the cytochrome P450 family. Requires heme as cofactor.

The protein resides in the membrane. Its pathway is secondary metabolite biosynthesis; terpenoid biosynthesis. Cytochrome P450 monooxygenase; part of the gene cluster that mediates the biosynthesis of pleuromutilin, a tricyclic diterpene showing antibacterial properties. The geranylgeranyl diphosphate (GGPP) synthase ple4 catalyzes the first step in pleuromutilin biosynthesis. GGPP is then substrate of the premutilin synthase (PS) ple3 to yield premutilin. Premutilin synthase is a bifunctional enzyme composed of the fusion of a class II diterpene cyclase (DTC) and a class I diterpene synthase (DTS), with the corresponding domains and active sites containing characteristic aspartate-rich motifs. GGPP is first converted to mutildienyl-diphosphate (MPP) at the class II DTC site. MPP is subsequently further cyclized at the class I DTS site, followed by a 1,5-hydride shift and addition of water prior to terminating deprotonation, to yield premutilin. The cytochrome P450 monooxygenases ple5 and ple6 hydroxylate premutilin at C-11 and C-3, respectively, producing 11-hydroxypremutilin and 3-hydroxypremutilin. The combination of the actions of both ple5 and ple6 leads to the production of 3,11-dihydroxypremutilin. The short chain dehydrogenase ple7 further converts 3,11-dihydroxypremutilin into mutilin. The acetyltransferase ple2 then acetylates mutilin to produce 14-O-acetylmutilin. Finally, the cytochrome P450 monooxygenase ple1 catalyzes hydroxylation on the alpha position of the acetyl side chain of 14-O-acetylmutilin to yield pleuromutilin. This chain is Cytochrome P450 monooxygenase ple5B, found in Rhodocybe pseudopiperita (Clitopilus pseudopiperitus).